A 103-amino-acid polypeptide reads, in one-letter code: Large ribosomal subunit protein bL21 (103 aa).

The protein belongs to the bacterial ribosomal protein bL21 family. In terms of assembly, part of the 50S ribosomal subunit. Contacts protein L20.

Functionally, this protein binds to 23S rRNA in the presence of protein L20. The polypeptide is Large ribosomal subunit protein bL21 (Serratia proteamaculans (strain 568)).